Here is a 1178-residue protein sequence, read N- to C-terminus: Double-stranded RNA-specific adenosine deaminase (1178 aa).

The interval 1-40 is disordered; sequence MSQGFRGPTGVFPHQTQSYLDPSHEHSKWRYPQPQGPESY. Asymmetric dimethylarginine occurs at positions 30 and 42. The region spanning 135 to 201 is the Z-binding 1 domain; it reads LSISQSPEQK…GKPPLWSLVP (67 aa). Positions 135–204 are interaction with Z-DNA; sequence LSISQSPEQK…PLWSLVPLSQ (70 aa). Residues 221-244 are disordered; the sequence is EFPRGEPGLDSEDGDPASDLEGPS. Residues 229-238 show a composition bias toward acidic residues; that stretch reads LDSEDGDPAS. Residues serine 231 and serine 238 each carry the phosphoserine modification. The region spanning 246 to 310 is the Z-binding 2 domain; that stretch reads PLDMAEIKEK…ATPPIWYLTD (65 aa). The tract at residues 316–383 is disordered; sequence LQMKRSTHSA…SRHEARPGPM (68 aa). Residues 323 to 337 show a composition bias toward low complexity; that stretch reads HSAPAPTPTAVPEAT. Basic and acidic residues predominate over residues 360–379; that stretch reads KRVENGQEPAIKHESRHEAR. Lysine 371 is covalently cross-linked (Glycyl lysine isopeptide (Lys-Gly) (interchain with G-Cter in SUMO); alternate). Lysine 371 is covalently cross-linked (Glycyl lysine isopeptide (Lys-Gly) (interchain with G-Cter in SUMO1); alternate). Lysine 371 participates in a covalent cross-link: Glycyl lysine isopeptide (Lys-Gly) (interchain with G-Cter in SUMO2); alternate. Serine 434 bears the Phosphoserine mark. In terms of domain architecture, DRBM 1 spans 456 to 524; it reads NPVSGLLEYA…AVKAMAILLR (69 aa). Residues 527–550 show a composition bias toward basic and acidic residues; sequence KAKDSGQPEDLSHCPMEEDSEKPA. The interval 527 to 564 is disordered; the sequence is KAKDSGQPEDLSHCPMEEDSEKPAEAQAPSSSATSLFS. Residues 554 to 564 are compositionally biased toward polar residues; it reads APSSSATSLFS. Serine 567, serine 582, and serine 589 each carry phosphoserine. Residues 567–635 enclose the DRBM 2 domain; that stretch reads SPVTTLLECM…AEEAMKALQE (69 aa). The disordered stretch occupies residues 631 to 657; the sequence is KALQEEAASSADDQSGGANTDSLDESM. Residues 635 to 648 show a composition bias toward low complexity; that stretch reads EEAASSADDQSGGA. Positions 665–674 are N-terminal extension of DRBM 3 and constituent of a bi-partite nuclear localization signal; it reads IGELVRYLNT. Positions 675 to 743 constitute a DRBM 3 domain; the sequence is NPVGGLLEYA…ADAALRVLIG (69 aa). Residues 744-750 form a C-terminal extension of DRBM 3 and constituent of a bi-partite nuclear localization signal region; it reads ESEKAEQ. Threonine 757 carries the post-translational modification Phosphothreonine. Serine 763, serine 772, and serine 774 each carry phosphoserine. Residue lysine 824 forms a Glycyl lysine isopeptide (Lys-Gly) (interchain with G-Cter in SUMO2) linkage. The A to I editase domain occupies 835-1170; that stretch reads SLGTGNRCVK…ISKPQEEKNF (336 aa). Zn(2+) is bound at residue histidine 859. Glutamate 861 serves as the catalytic Proton donor. Zn(2+)-binding residues include cysteine 915 and cysteine 985.

Homodimer. Homodimerization is essential for its catalytic activity. Isoform 5 can form heterodimers with ADARB1/ADAR2. Isoform 1 and isoform 5 (via DRBM 3 domain) interact with TNPO1. Isoform 5 (via DRBM domains) interacts with XPO5. Isoform 1 and isoform 5 can interact with UPF1. Isoform 1 interacts with ILF2/NF45 and ILF3/NF90. Binding to ILF3/NF90 up-regulates ILF3-mediated gene expression. Isoform 1 and isoform 5 interact with EIF2AK2/PKR. Sumoylation reduces RNA-editing activity. As to expression, highest levels in brain and spleen. Lowest levels in liver.

It is found in the cytoplasm. The protein resides in the nucleus. The protein localises to the nucleolus. The enzyme catalyses adenosine in double-stranded RNA + H2O + H(+) = inosine in double-stranded RNA + NH4(+). Its function is as follows. Catalyzes the hydrolytic deamination of adenosine to inosine in double-stranded RNA (dsRNA) referred to as A-to-I RNA editing. This may affect gene expression and function in a number of ways that include mRNA translation by changing codons and hence the amino acid sequence of proteins since the translational machinery read the inosine as a guanosine; pre-mRNA splicing by altering splice site recognition sequences; RNA stability by changing sequences involved in nuclease recognition; genetic stability in the case of RNA virus genomes by changing sequences during viral RNA replication; and RNA structure-dependent activities such as microRNA production or targeting or protein-RNA interactions. Can edit both viral and cellular RNAs and can edit RNAs at multiple sites (hyper-editing) or at specific sites (site-specific editing). Its cellular RNA substrates include: bladder cancer-associated protein (BLCAP), neurotransmitter receptors for glutamate (GRIA2) and serotonin (HTR2C) and GABA receptor (GABRA3). Site-specific RNA editing of transcripts encoding these proteins results in amino acid substitutions which consequently alters their functional activities. Exhibits low-level editing at the GRIA2 Q/R site, but edits efficiently at the R/G site and HOTSPOT1. Does not affect polyomavirus replication but provides protection against virus-induced cytopathic effects. Essential for embryonic development and cell survival and plays a critical role in the maintenance of hematopoietic stem cells. The chain is Double-stranded RNA-specific adenosine deaminase (Adar) from Mus musculus (Mouse).